The sequence spans 103 residues: MQNQKIRIRLKAFDYRLIDQSALEIVDTAKRTGAVVRGPVPLPTRIERFDLLRSPHVNKASRDQFEIRTHQRLMDIIDPTDKTVDALMKLDLPAGVDVEIKLQ.

Belongs to the universal ribosomal protein uS10 family. As to quaternary structure, part of the 30S ribosomal subunit.

Its function is as follows. Involved in the binding of tRNA to the ribosomes. The protein is Small ribosomal subunit protein uS10 of Aromatoleum aromaticum (strain DSM 19018 / LMG 30748 / EbN1) (Azoarcus sp. (strain EbN1)).